A 170-amino-acid chain; its full sequence is Putative 4-hydroxy-4-methyl-2-oxoglutarate aldolase (170 aa).

Substrate is bound by residues 81–84 and Arg-103; that span reads GDII. Asp-104 contributes to the a divalent metal cation binding site.

This sequence belongs to the class II aldolase/RraA-like family. As to quaternary structure, homotrimer. A divalent metal cation is required as a cofactor.

The catalysed reaction is 4-hydroxy-4-methyl-2-oxoglutarate = 2 pyruvate. It carries out the reaction oxaloacetate + H(+) = pyruvate + CO2. In terms of biological role, catalyzes the aldol cleavage of 4-hydroxy-4-methyl-2-oxoglutarate (HMG) into 2 molecules of pyruvate. Also contains a secondary oxaloacetate (OAA) decarboxylase activity due to the common pyruvate enolate transition state formed following C-C bond cleavage in the retro-aldol and decarboxylation reactions. In Corynebacterium efficiens (strain DSM 44549 / YS-314 / AJ 12310 / JCM 11189 / NBRC 100395), this protein is Putative 4-hydroxy-4-methyl-2-oxoglutarate aldolase.